The chain runs to 287 residues: Diphthine methyl ester synthase (287 aa).

S-adenosyl-L-methionine is bound by residues leucine 9, aspartate 84, glycine 87, 112-113 (SI), leucine 163, valine 221, and histidine 248.

Belongs to the diphthine synthase family.

The protein localises to the cytoplasm. The enzyme catalyses 2-[(3S)-amino-3-carboxypropyl]-L-histidyl-[translation elongation factor 2] + 4 S-adenosyl-L-methionine = diphthine methyl ester-[translation elongation factor 2] + 4 S-adenosyl-L-homocysteine + 3 H(+). Its pathway is protein modification; peptidyl-diphthamide biosynthesis. Its function is as follows. S-adenosyl-L-methionine-dependent methyltransferase that catalyzes four methylations of the modified target histidine residue in translation elongation factor 2 (EF-2), to form an intermediate called diphthine methyl ester. The four successive methylation reactions represent the second step of diphthamide biosynthesis. The protein is Diphthine methyl ester synthase (dph-5) of Neurospora crassa (strain ATCC 24698 / 74-OR23-1A / CBS 708.71 / DSM 1257 / FGSC 987).